Here is a 644-residue protein sequence, read N- to C-terminus: Sodium/hydrogen exchanger 9 (644 aa).

The Lumenal portion of the chain corresponds to 1–20; the sequence is MERQRRFMSEKDEYQFQHQG. Residues 21-41 traverse the membrane as a helical segment; the sequence is AVELLVFNFLLILTILTIWLF. The Cytoplasmic segment spans residues 42 to 45; sequence KNHR. The helical transmembrane segment at 46–66 threads the bilayer; it reads FRFLHETGGAMVYGLIMGLIL. Over 67–126 the chain is Lumenal; that stretch reads RYATAPTDIESGTVYDCGKLAFSPSTLLINITDQVYEYKYKREISQHNINPHLGNAILEK. A helical transmembrane segment spans residues 127–147; it reads MTFDPEIFFNVLLPPIIFHAG. At 148-164 the chain is on the cytoplasmic side; it reads YSLKKRHFFQNLGSILT. The chain crosses the membrane as a helical span at residues 165–185; it reads YAFLGTAISCIVIGLIMYGFV. The Lumenal portion of the chain corresponds to 186-203; the sequence is KAMVYAGQLKNGDFHFTD. The helical transmembrane segment at 204–224 threads the bilayer; sequence CLFFGSLMSATDPVTVLAIFH. Topologically, residues 225-235 are cytoplasmic; that stretch reads ELHVDPDLYTL. A helical membrane pass occupies residues 236 to 256; sequence LFGESVLNDAVAIVLTYSISI. Residues 257-277 lie on the Lumenal side of the membrane; it reads YSPKENPNAFDAAAFFQSVGN. Residues 278–298 form a helical membrane-spanning segment; it reads FLGIFAGSFAMGSAYAVVTAL. Over 299–301 the chain is Cytoplasmic; it reads LTK. A run of 2 helical transmembrane segments spans residues 302–322 and 323–343; these read FTKL…LSWS and AFLS…FCGV. Over 344–364 the chain is Cytoplasmic; that stretch reads TQAHYTYNNLSLDSKMRTKQL. A helical transmembrane segment spans residues 365 to 385; that stretch reads FEFMNFLAENVIFCYMGLALF. Thr386 is a topological domain (lumenal). The chain crosses the membrane as a helical span at residues 387 to 407; it reads FQNHIFNALFILGAFLAIFVA. Residues 408-429 lie on the Cytoplasmic side of the membrane; the sequence is RACNIYPLSFLLNLGRKHKIPW. The helical transmembrane segment at 430–450 threads the bilayer; the sequence is NFQHMMMFSGLRGAIAFALAI. Residues 451-465 lie on the Lumenal side of the membrane; that stretch reads RDTESQPKQMMFSTT. Residues 466 to 486 traverse the membrane as a helical segment; the sequence is LLLVFFTVWVFGGGTTPMLTW. The Cytoplasmic portion of the chain corresponds to 487-644; the sequence is LQIRVGVDLD…EQTPGQSQLN (158 aa). A disordered region spans residues 593–622; that stretch reads QAASPCSPPTRLGLDQKAAPQTPGKENIYE.

The protein belongs to the monovalent cation:proton antiporter 1 (CPA1) transporter (TC 2.A.36) family. In terms of assembly, homodimer; phosphatidylinositol-4,5-bisphosphate (PIP2) and phosphatidylinositol 3,4,5-trisphosphate (PIP3) could be involved in the dimer stabilization. Interacts (via the C-terminus) with RACK1. Interacts with CHP1.

The protein resides in the late endosome membrane. It localises to the early endosome membrane. Its subcellular location is the recycling endosome membrane. The protein localises to the cell membrane. It is found in the cytoplasmic vesicle. The protein resides in the phagosome membrane. The catalysed reaction is Na(+)(in) + H(+)(out) = Na(+)(out) + H(+)(in). It carries out the reaction K(+)(in) + H(+)(out) = K(+)(out) + H(+)(in). Functionally, endosomal Na(+), K(+)/H(+) antiporter. Mediates the electroneutral exchange of endosomal luminal H(+) for a cytosolic Na(+) or K(+). By facilitating proton efflux, SLC9A9 counteracts the acidity generated by vacuolar (V)-ATPase, thereby limiting luminal acidification. Regulates organellar pH and consequently, endosome maturation and endocytic trafficking of plasma membrane receptors and neurotransporters. Promotes the recycling of transferrin receptors back to the cell surface to facilitate additional iron uptake in the brain. Regulates synaptic transmission by regulating the luminal pH of axonal endosomes. Regulates phagosome lumenal pH, thus affecting phagosome maturation, and consequently, microbicidal activity in macrophages. Can also be active at the cell surface of specialized cells, e.g., in the inner ear hair bundles uses the high K(+) of the endolymph to regulate intracelular pH. In Equus caballus (Horse), this protein is Sodium/hydrogen exchanger 9 (SLC9A9).